Reading from the N-terminus, the 582-residue chain is MSLFHLLRRSVTVAVMSESAPNHTSARRLTQPLEPFVGRQVLVGVSGGADSVGLLRALLAVGALPAVAHLDHALRPESVDDAAWVSDLCARLGVPCEVTRIDVGAVAARRNWNLEAARRLRYDVLSRAAKHSGAEVILTAHTRRDQAETVLMELLRGEGRIRGIPPQRGRVRRPWLNVGRAEIETYLRGLGQDWREDASNADPRFTRAWLRREVMPVLLTRFPAAETALAQVAELGAEDDAALQALAARLTPHTPLDRQPPAVLRRWLAAELRSGGLDFTAEQLRDLAGALNAGQTRHLTLPTGRDVTVTGGHLYTAPCDWPEPDFPLPPDWTRRTRQAGDRIRLAGGTRKLSDVLTDAHLPRAERDRVPLLTDEHGAVQWVGVQPPLWAVGARESLGLPADPLHAAMGEALALAQQAAERQEVPVGAVVLNADGEIVGRGRNTSREDGDMTCHAELAALREAAAGLGTPYLSDCTLVVTLEPCPMCLGAALEARIGHIVYGAANPKAGALGGVSDLLADHWGWRPTVQGGVRAGEAARLLREVFGEVRRRSADTPQTPNAETPAPRSSRSTSASGKPTMLE.

46–51 (SGGADS) contacts ATP. A CMP/dCMP-type deaminase domain is found at 402–525 (DPLHAAMGEA…DLLADHWGWR (124 aa)). A disordered region spans residues 548–582 (VRRRSADTPQTPNAETPAPRSSRSTSASGKPTMLE). The segment covering 563–575 (TPAPRSSRSTSAS) has biased composition (low complexity).

It belongs to the tRNA(Ile)-lysidine synthase family.

It is found in the cytoplasm. The catalysed reaction is cytidine(34) in tRNA(Ile2) + L-lysine + ATP = lysidine(34) in tRNA(Ile2) + AMP + diphosphate + H(+). Ligates lysine onto the cytidine present at position 34 of the AUA codon-specific tRNA(Ile) that contains the anticodon CAU, in an ATP-dependent manner. Cytidine is converted to lysidine, thus changing the amino acid specificity of the tRNA from methionine to isoleucine. The sequence is that of tRNA(Ile)-lysidine synthase from Deinococcus radiodurans (strain ATCC 13939 / DSM 20539 / JCM 16871 / CCUG 27074 / LMG 4051 / NBRC 15346 / NCIMB 9279 / VKM B-1422 / R1).